Reading from the N-terminus, the 287-residue chain is AA14 family lytic polysaccharide monooxygenase A (287 aa).

A signal peptide spans 1 to 18 (MLRILTLSILATSKLASA). 3 N-linked (GlcNAc...) asparagine glycosylation sites follow: Asn-33, Asn-83, and Asn-137. Cystine bridges form between Cys-188/Cys-193, Cys-195/Cys-216, and Cys-236/Cys-243. An N-linked (GlcNAc...) asparagine glycan is attached at Asn-238.

This sequence belongs to the polysaccharide monooxygenase AA14 family. Requires Cu(2+) as cofactor.

The protein localises to the secreted. In terms of biological role, lytic polysaccharide monooxygenase (LPMO) that has a broad substrate specificity with strong oxidative activity on pure amorphous cellulose and xyloglucan and plays as a bifunctional enzyme to decompose some specific network structures formed between cellulose and hemicellulose in the plant cell walls. Catalysis by LPMOs requires the reduction of the active-site copper from Cu(II) to Cu(I) by a reducing agent and H(2)O(2) or O(2) as a cosubstrate. Simultaneously oxidizes cellulose, xylan and xyloglucan in natural hemi/cellulosic substrate such as fibrillated eucalyptus pulp, and releases native and oxidized cello-oligosaccharides, xylo-oligosaccharides and xyloglucan oligosaccharides from this substrate. The cellulolytic/hemicellulolytic activity becomes weaker as the contents of xylan increase in the alkaline-extracted hemi/cellulosic substrates. This Talaromyces rugulosus (Penicillium rugulosum) protein is AA14 family lytic polysaccharide monooxygenase A.